A 118-amino-acid polypeptide reads, in one-letter code: Small ribosomal subunit protein bS6 (118 aa).

It belongs to the bacterial ribosomal protein bS6 family.

Its function is as follows. Binds together with bS18 to 16S ribosomal RNA. This chain is Small ribosomal subunit protein bS6, found in Saccharopolyspora erythraea (strain ATCC 11635 / DSM 40517 / JCM 4748 / NBRC 13426 / NCIMB 8594 / NRRL 2338).